A 422-amino-acid chain; its full sequence is tRNA(Met) cytidine acetate ligase (422 aa).

ATP contacts are provided by residues I7–H20, G102, N172, and R197.

The protein belongs to the TmcAL family.

The protein resides in the cytoplasm. The catalysed reaction is cytidine(34) in elongator tRNA(Met) + acetate + ATP = N(4)-acetylcytidine(34) in elongator tRNA(Met) + AMP + diphosphate. In terms of biological role, catalyzes the formation of N(4)-acetylcytidine (ac(4)C) at the wobble position of elongator tRNA(Met), using acetate and ATP as substrates. First activates an acetate ion to form acetyladenylate (Ac-AMP) and then transfers the acetyl group to tRNA to form ac(4)C34. The protein is tRNA(Met) cytidine acetate ligase of Halothermothrix orenii (strain H 168 / OCM 544 / DSM 9562).